Reading from the N-terminus, the 379-residue chain is MSTVLPEDSVGLVTPQIARFDEPLALACGRSLAAYELIYETYGELNASASNAVLICHALSGHHHAAGYHAATDRKPGWWDSCIGPGKPIDTNRFFVVSLNNLGGCNGSTGPSSVNPATGKPYGADFPVLTVEDWVHSQARLADRLGIQTWAAIVGGSLGGMQALQWTITYPDRVRHCVDIASAPKLSAQNIAFNEVARQAILTDPEFHGGSFQDQGVTPKRGLMLARMVGHITYLSDDSMGEKFGRELKSDKLNYDFHSVEFQVESYLRYQGEEFSGRFDANTYLLMTKALDYYDPAAAHGGDLAATLAHVTADYCIMSFTTDWRFSPARSREIVDALMAARKNVCYLDIDSPYGHDAFLIPTPRYMQGFANYMNRIVI.

One can recognise an AB hydrolase-1 domain in the interval 51-360 (NAVLICHALS…DSPYGHDAFL (310 aa)). Ser157 functions as the Nucleophile in the catalytic mechanism. Residue Arg227 participates in substrate binding. Catalysis depends on residues Asp323 and His356. Residue Asp357 coordinates substrate.

Belongs to the AB hydrolase superfamily. MetX family. Homodimer.

It localises to the cytoplasm. It catalyses the reaction L-homoserine + succinyl-CoA = O-succinyl-L-homoserine + CoA. It participates in amino-acid biosynthesis; L-methionine biosynthesis via de novo pathway; O-succinyl-L-homoserine from L-homoserine: step 1/1. Transfers a succinyl group from succinyl-CoA to L-homoserine, forming succinyl-L-homoserine. This chain is Homoserine O-succinyltransferase, found in Pseudomonas entomophila (strain L48).